We begin with the raw amino-acid sequence, 326 residues long: AA10 family lytic polysaccharide monooxygenase C (326 aa).

The first 32 residues, 1-32 (MVFSNSNASVSLFRLVALVATLSHLVFTFVDA), serve as a signal peptide directing secretion. Residues His-33 and His-118 each contribute to the Cu(2+) site. A Chitin-binding type-4 domain is found at 33-200 (HGYVTFPASR…ANAFYQCLDL (168 aa)). Cys-81 and Cys-197 are disulfide-bonded. 4 N-linked (GlcNAc...) asparagine glycosylation sites follow: Asn-206, Asn-215, Asn-266, and Asn-303. Positions 206–326 (NSSSSSSSSN…KSQMRRDRQG (121 aa)) are disordered. Low complexity predominate over residues 207-281 (SSSSSSSSNS…NNGGSSGSTT (75 aa)).

Belongs to the polysaccharide monooxygenase AA10 family. It depends on Cu(2+) as a cofactor.

Its subcellular location is the secreted. Functionally, lytic polysaccharide monooxygenase (LPMO) that oxidatively cleaves alpha- and beta-chitin with C1 regioselectivity. Catalysis by LPMOs requires the reduction of the active-site copper from Cu(II) to Cu(I) by a reducing agent and H(2)O(2) or O(2) as a cosubstrate. Exhibits enzymatic activity on U.maydis fungal cell wall chitin and Boosts chitin hydrolysis by chitinase GH18A. This Mycosarcoma maydis (Corn smut fungus) protein is AA10 family lytic polysaccharide monooxygenase C.